The primary structure comprises 297 residues: Ribosomal RNA small subunit methyltransferase H (297 aa).

S-adenosyl-L-methionine is bound by residues 37 to 39 (GGH), Glu-56, Phe-87, Asp-102, and His-109.

It belongs to the methyltransferase superfamily. RsmH family.

Its subcellular location is the cytoplasm. The catalysed reaction is cytidine(1402) in 16S rRNA + S-adenosyl-L-methionine = N(4)-methylcytidine(1402) in 16S rRNA + S-adenosyl-L-homocysteine + H(+). Its function is as follows. Specifically methylates the N4 position of cytidine in position 1402 (C1402) of 16S rRNA. The sequence is that of Ribosomal RNA small subunit methyltransferase H from Borrelia duttonii (strain Ly).